Reading from the N-terminus, the 35-residue chain is Delta-theraphotoxin-Hm1a (35 aa).

Disulfide bonds link C2-C16, C9-C21, and C15-C28.

This sequence belongs to the neurotoxin 10 (Hwtx-1) family. 09 (HaTx) subfamily. As to expression, expressed by the venom gland.

It is found in the secreted. In terms of biological role, gating-modifier toxin that potently inhibits inactivation of the mammalian Nav1.1/SCN1A sodium channel (EC(50)=38 nM). Also moderately inhibits inactivation of Nav1.2/SCN2A (EC(50)=236 nM) and Nav1.3/SCN3A (EC(50)=220 nM) when the channels are expressed in oocytes without the beta-1 auxiliary subunit. Does not inhibit inactivation of Nav1.2/SCN2A when the channel is coexpressed with the beta-1 auxiliary subunit. When tested on Nav1.1/SCN1A channel, it enhances peak current amplitude and potently delays channel inactivation in a dose-dependent manner, leading to a large sustained current. It has no effect on the voltage-dependence of steady-state activation, and induces a depolarizing shift in the voltage dependence of inactivation. In addition, it does not modify the recovery from fast inactivation in Nav1.1/SCN1A. The binding affinity and subtype selectivity of the toxin towards Nav1.1/SCN1A channel is determined by residues within both the S1-S2 and S3-S4 loops of the domain IV voltage sensor of the channel. This toxin also weakly inhibits several subtypes of voltage-gated potassium channels. It moderately blocks Kv2.1/KCNB1 (23% inhibition at 100 nM), Kv2.2/KCNB2 (19.7% at 100 nM and 51% at 300 nM), Kv4.1/KCND1 (IC(50)=280 nM), Kv4.2/KCND2 (39% at 300 nM) and Kv4.3/KCND3 (43% at 300 nM). In vivo, intracerebroventricular injection into mice elicits convulsions, spasms, tremors and rapid death. When injected into mouse hindpaw, the toxin elicits an immediate and robust response to pain. However, intraplantar injection of toxin does not cause neurogenic inflammation or alter sensitivity to heat, indicative of a modality-specific effect on mechanosensitive neurons. In Dravet syndrome mice model, intracerebroventricular infusion of this peptide rescues mice from seizures and premature death. The sequence is that of Delta-theraphotoxin-Hm1a from Heteroscodra maculata (Togo starburst tarantula).